The following is a 139-amino-acid chain: NADH-quinone oxidoreductase subunit A (139 aa).

Transmembrane regions (helical) follow at residues 16-36 (GLFI…ASLL), 69-89 (LVAM…AWAV), and 94-114 (VGWE…AGLV).

The protein belongs to the complex I subunit 3 family. In terms of assembly, NDH-1 is composed of 14 different subunits. Subunits NuoA, H, J, K, L, M, N constitute the membrane sector of the complex.

The protein localises to the cell inner membrane. The catalysed reaction is a quinone + NADH + 5 H(+)(in) = a quinol + NAD(+) + 4 H(+)(out). NDH-1 shuttles electrons from NADH, via FMN and iron-sulfur (Fe-S) centers, to quinones in the respiratory chain. The immediate electron acceptor for the enzyme in this species is believed to be ubiquinone. Couples the redox reaction to proton translocation (for every two electrons transferred, four hydrogen ions are translocated across the cytoplasmic membrane), and thus conserves the redox energy in a proton gradient. The chain is NADH-quinone oxidoreductase subunit A from Chromohalobacter salexigens (strain ATCC BAA-138 / DSM 3043 / CIP 106854 / NCIMB 13768 / 1H11).